Here is a 441-residue protein sequence, read N- to C-terminus: MMNKGIVMDIKKHSVVVLTPNGEFITCKRKGDSCMIGEEISFDEQEQKASRFSIPYFLKPASLLVACFLCALLFFYNQPEEKVFAYVSVDINPSLEVSVTKDLRVIDLQACNDDGRRILKELKQWENKQLQEVIRTIIKQSQEDKYLTNDKQVMLTAIAKDKLLEPKLEKVMKELKKEYELKHITVEYQSSTMQVRENAIKAGIGTGVYIKQENEKNKSVTPPATPSNPVENEEERQSQPDSSPDVVPDLSSVKDKKYEKPEYKEQKKIEEQPTKQIKENNGRGSQQENRGNQQENNGRESQQGNNGNQQGNNGRESQQGNNGNQQGNNGRGSQGNNGHQQENNGRGSQGNNGNQQGNNGRGSQGNNGHQQENNGRGSQGNNGNQQGDNGRGSQQGNNGNQQGDNGRGSQKENVGNEQGNNGRGSQQENRGHQQGNEKKNQ.

Residues 1–53 (MMNKGIVMDIKKHSVVVLTPNGEFITCKRKGDSCMIGEEISFDEQEQKASRFS) lie on the Cytoplasmic side of the membrane. Positions 3-51 (NKGIVMDIKKHSVVVLTPNGEFITCKRKGDSCMIGEEISFDEQEQKASR) constitute a RsgI N-terminal anti-sigma domain. Residues 54–76 (IPYFLKPASLLVACFLCALLFFY) form a helical membrane-spanning segment. Residues 77–441 (NQPEEKVFAY…HQQGNEKKNQ (365 aa)) are Extracellular-facing. Residues 213-441 (ENEKNKSVTP…HQQGNEKKNQ (229 aa)) form a disordered region. Residues 219–230 (SVTPPATPSNPV) show a composition bias toward polar residues. Residues 240-251 (PDSSPDVVPDLS) are compositionally biased toward low complexity. Basic and acidic residues predominate over residues 252-281 (SVKDKKYEKPEYKEQKKIEEQPTKQIKENN). 3 stretches are compositionally biased toward low complexity: residues 282-328 (GRGS…QQGN), 336-358 (NNGH…QQGN), and 366-408 (NNGH…NGRG). Residues 411–428 (KENVGNEQGNNGRGSQQE) show a composition bias toward polar residues. Residues 429-441 (NRGHQQGNEKKNQ) are compositionally biased toward basic and acidic residues.

As to quaternary structure, interacts (via RsgI N-terminal anti-sigma domain) with SigI.

The protein resides in the cell membrane. Its function is as follows. Anti-sigma factor for SigI. Negatively regulates SigI activity through direct interaction. Has no direct effect on virulence gene expression. This Bacillus anthracis protein is Anti-sigma-I factor RsgI.